Consider the following 154-residue polypeptide: Large ribosomal subunit protein uL13 (154 aa).

The protein belongs to the universal ribosomal protein uL13 family. Part of the 50S ribosomal subunit.

This protein is one of the early assembly proteins of the 50S ribosomal subunit, although it is not seen to bind rRNA by itself. It is important during the early stages of 50S assembly. This is Large ribosomal subunit protein uL13 from Cereibacter sphaeroides (strain ATCC 17025 / ATH 2.4.3) (Rhodobacter sphaeroides).